A 151-amino-acid chain; its full sequence is Ribosome maturation factor RimP (151 aa).

It belongs to the RimP family.

The protein resides in the cytoplasm. Its function is as follows. Required for maturation of 30S ribosomal subunits. The chain is Ribosome maturation factor RimP from Aliivibrio fischeri (strain MJ11) (Vibrio fischeri).